The sequence spans 527 residues: Serine/threonine-protein kinase NLK (527 aa).

Sufficient for interaction with DAPK3 regions lie at residues 1–125 and 124–416; these read MSLC…KAHH and HHHQ…SKRI. 2 required for interaction with TAB2 regions span residues 1–304 and 434–527; these read MSLC…VVTQ and YHTC…LVWE. Disordered stretches follow at residues 22 to 72 and 90 to 139; these read AAAA…SSAA and QQPY…LDIE. The segment covering 26 to 54 has biased composition (basic residues); the sequence is GHHHHHHHHLPHLPPPHLHHHHHPQHHLH. Over residues 103 to 119 the composition is skewed to low complexity; it reads PGPAAAAPAQVQAAAAA. The span at 122–131 shows a compositional bias: basic residues; that stretch reads KAHHHQHSHH. The Protein kinase domain maps to 138–427; the sequence is IEPDRPIGYG…AKDALAHPYL (290 aa). ATP contacts are provided by residues 144 to 152 and Lys167; that span reads IGYGAFGVV. The Proton acceptor role is filled by Asp264. Thr298 bears the Phosphothreonine; by autocatalysis mark. Positions 298 to 300 match the TQE motif; the sequence is TQE. A required for homodimerization and kinase activation and localization to the nucleus region spans residues 428–527; sequence DEGRLRYHTC…EMPPSPLVWE (100 aa). Ser522 carries the post-translational modification Phosphoserine.

It belongs to the protein kinase superfamily. CMGC Ser/Thr protein kinase family. MAP kinase subfamily. In terms of assembly, homodimer. Homodimerization is required for intermolecular autophosphorylation, kinase activation and nuclear localization. Interacts with RNF138/NARF. Interacts with FOXO1 and FOXO3. Interacts with the upstream activating kinases HIPK2 and MAP3K7/TAK1. Interaction with MAP3K7/TAK1 seems to be indirect, and may be mediated by other proteins such as STAT3, TAB1 and TAB2. Interacts with and phosphorylates a number of transcription factors including FOXO4, LEF1, MYB, MYBL1, MYBL2, NOTCH1 and TCF7L2/TCF4. May interact with components of cullin-RING-based SCF (SKP1-CUL1-F-box protein) E3 ubiquitin-protein ligase complexes. Interacts with MEF2A. Interacts with ATF5; the interaction stabilizes ATF5 at the protein level in a kinase-independent manner. Requires Mg(2+) as cofactor. In terms of processing, phosphorylated on Thr-298. Intermolecular autophosphorylation on Thr-298 activates the enzyme. Expressed at high levels in the brain, and at lower levels in heart, kidney, lung and liver.

The protein resides in the nucleus. The protein localises to the cytoplasm. It carries out the reaction L-seryl-[protein] + ATP = O-phospho-L-seryl-[protein] + ADP + H(+). The catalysed reaction is L-threonyl-[protein] + ATP = O-phospho-L-threonyl-[protein] + ADP + H(+). With respect to regulation, activated by the non-canonical Wnt signaling pathway, in which WNT5A leads to activation of MAP3K7/TAK1 and HIPK2, which subsequently phosphorylates and activates this protein. Activated by dimerization and subsequent intermolecular autophosphorylation on Thr-298. Other cytokines such as IL6 may also activate this regulatory circuit. Functionally, serine/threonine-protein kinase that regulates a number of transcription factors with key roles in cell fate determination. Positive effector of the non-canonical Wnt signaling pathway, acting downstream of WNT5A, MAP3K7/TAK1 and HIPK2. Negative regulator of the canonical Wnt/beta-catenin signaling pathway. Binds to and phosphorylates TCF7L2/TCF4 and LEF1, promoting the dissociation of the TCF7L2/LEF1/beta-catenin complex from DNA, as well as the ubiquitination and subsequent proteolysis of LEF1. Together these effects inhibit the transcriptional activation of canonical Wnt/beta-catenin target genes. Negative regulator of the Notch signaling pathway. Binds to and phosphorylates NOTCH1, thereby preventing the formation of a transcriptionally active ternary complex of NOTCH1, RBPJ/RBPSUH and MAML1. Negative regulator of the MYB family of transcription factors. Phosphorylation of MYB leads to its subsequent proteolysis while phosphorylation of MYBL1 and MYBL2 inhibits their interaction with the coactivator CREBBP. Other transcription factors may also be inhibited by direct phosphorylation of CREBBP itself. Acts downstream of IL6 and MAP3K7/TAK1 to phosphorylate STAT3, which is in turn required for activation of NLK by MAP3K7/TAK1. Upon IL1B stimulus, cooperates with ATF5 to activate the transactivation activity of C/EBP subfamily members. Phosphorylates ATF5 but also stabilizes ATF5 protein levels in a kinase-independent manner. Acts as an inhibitor of the mTORC1 complex in response to osmotic stress by mediating phosphorylation of RPTOR, thereby preventing recruitment of the mTORC1 complex to lysosomes. In Mus musculus (Mouse), this protein is Serine/threonine-protein kinase NLK.